The chain runs to 257 residues: MALPDFTMHQLLEAGVHFGHQTHRWNPKMIRYIYGQRNNIHIIDLAQTVPLLHQALKLVSDTVARGGRILFVGTKRQASDIIADAANRSAQYYVNARWLGGMLTNWKTISNSIHRLRKLDKILATETQGFTKKERLNLERDREKLNRALGGIKDMGSVPDLIFIIDTNKENIAIQEAKRLGIPVIAIIDTNCNPDNVDHPIPGNDDASRAISLYCDLFARAALDGIARQQGAMGIDLGAQADAPVKPILENTIPVSE.

It belongs to the universal ribosomal protein uS2 family.

This Bartonella quintana (strain Toulouse) (Rochalimaea quintana) protein is Small ribosomal subunit protein uS2.